A 125-amino-acid chain; its full sequence is UPF0102 protein mlr4633 (125 aa).

The protein belongs to the UPF0102 family.

This Mesorhizobium japonicum (strain LMG 29417 / CECT 9101 / MAFF 303099) (Mesorhizobium loti (strain MAFF 303099)) protein is UPF0102 protein mlr4633.